A 438-amino-acid polypeptide reads, in one-letter code: (S)-3,5-dihydroxyphenylglycine transaminase (438 aa).

Residue Lys266 is modified to N6-(pyridoxal phosphate)lysine.

Belongs to the class-I pyridoxal-phosphate-dependent aminotransferase family. Pyridoxal 5'-phosphate is required as a cofactor.

The catalysed reaction is (S)-3,5-dihydroxyphenylglycine + 2-oxoglutarate = 2-(3,5-dihydroxyphenyl)-2-oxoacetate + L-glutamate. It functions in the pathway antibiotic biosynthesis; vancomycin biosynthesis. Its function is as follows. Catalyzes the transamination of p-hydroxybenzoylformate to L-p-hydroxyphenylglycine as part of the biosynthesis of the (S)-3,5-dihydroxyphenylglycine constituent of the glycopeptide antibiotic chloroeremomycin, a member of the vancomycin group of antibiotics. The sequence is that of (S)-3,5-dihydroxyphenylglycine transaminase (hpgT) from Amycolatopsis orientalis (Nocardia orientalis).